We begin with the raw amino-acid sequence, 1484 residues long: Cystic fibrosis transmembrane conductance regulator (1484 aa).

Residues 1-77 (MQRSPLEKAS…KLINALRRCF (77 aa)) lie on the Cytoplasmic side of the membrane. A helical transmembrane segment spans residues 78-98 (FWRFMFYGIILYLGEVTKSVQ). Positions 81-365 (FMFYGIILYL…WAVQTWYDSL (285 aa)) constitute an ABC transmembrane type-1 1 domain. Residues 99–122 (PLLLGRIIASYDPDNKEERSIAIY) lie on the Extracellular side of the membrane. A helical membrane pass occupies residues 123–146 (LGIGLCLLFVMRTLLLHPAIFGLH). The Cytoplasmic portion of the chain corresponds to 147–195 (RIGMQMRIAMFSLIYKKTLKLSSRVLDKISIGQLVSLLSNNLNKFDEGL). The chain crosses the membrane as a helical span at residues 196 to 216 (ALAHFVWIAPLQVTLLMGLLW). The Extracellular portion of the chain corresponds to 217–222 (DLLQAS). Residues 223 to 243 (AFCGLAFLIVLALFQAGLGRM) traverse the membrane as a helical segment. Over 244–298 (MMKYRDQRAGKINERLVITSEMIENIQSVKAYCWEEAMEKMIESIRQTELKLTRK) the chain is Cytoplasmic. A helical transmembrane segment spans residues 299–319 (AAYVRYFNSSAFFFSGFFVVF). At 320 to 339 (LSVLPYALIKTIVLRKIFTT) the chain is on the extracellular side. A helical membrane pass occupies residues 340-358 (ISFCIVLRMAVTRQFPWAV). The Cytoplasmic segment spans residues 359-860 (QTWYDSLGAI…YLRYVTIHKS (502 aa)). Residues Trp401, Ser434, 458-465 (GSTGAGKT), and Gln493 each bind ATP. The ABC transporter 1 domain maps to 423 to 646 (NADNSLFFSN…RPDFSSKLMG (224 aa)). A lipid anchor (S-palmitoyl cysteine) is attached at Cys524. 2 positions are modified to phosphoserine: Ser549 and Ser660. Positions 654–833 (SAERRNSIIT…EEINEEDLKE (180 aa)) are disordered R region. Ser670 is modified (phosphoserine; by PKA). Ser686 carries the phosphoserine modification. Lys688 is covalently cross-linked (Glycyl lysine isopeptide (Lys-Gly) (interchain with G-Cter in ubiquitin)). Phosphoserine is present on residues Ser700 and Ser712. Thr717 is modified (phosphothreonine). Phosphoserine occurs at positions 737, 769, 792, 797, and 815. Residues 861–881 (LVFVLIWCLVIFLAEVAISLV) traverse the membrane as a helical segment. Residues 861 to 1157 (LVFVLIWCLV…AVNSSIDVDS (297 aa)) enclose the ABC transmembrane type-1 2 domain. Topologically, residues 882-920 (VLWLLKKTASQDKGNSTQSINSSYTVIFTSTSTYYVFYI) are extracellular. N-linked (GlcNAc...) asparagine glycosylation is found at Asn896 and Asn902. The chain crosses the membrane as a discontinuously helical span at residues 921–941 (YVGVADTLLALGFFRGLPLVH). At 942–992 (TLITVSKILHHKMLHAVLQAPMSTLNALKAGGILNRFSKDIAILDDLLPLT) the chain is on the cytoplasmic side. A helical membrane pass occupies residues 993 to 1013 (IFDFVQLLLIVIGAVTVVSAL). At 1014-1015 (QP) the chain is on the extracellular side. The chain crosses the membrane as a helical span at residues 1016–1036 (YIFLATVPVIAAFIMLRAYFL). The Cytoplasmic portion of the chain corresponds to 1037–1097 (HTSQQLKQLE…TANWFLYLST (61 aa)). A helical membrane pass occupies residues 1098 to 1118 (LRWFQMRMEIIFVIFFIAITF). The Extracellular portion of the chain corresponds to 1119 to 1132 (ISILTTGEGVGAVG). The helical transmembrane segment at 1133–1153 (IILTLAMNIMGTLQWAVNSSI) threads the bilayer. The Cytoplasmic segment spans residues 1154 to 1484 (DVDSLMRSVS…TEEEVQETRL (331 aa)). Residues 1214–1447 (MTVKDLTAKY…KSLFRQAISP (234 aa)) enclose the ABC transporter 2 domain. ATP is bound by residues Tyr1223 and 1248–1255 (GRTGSGKS). The interval 1390 to 1484 (RTLKQAFADC…TEEEVQETRL (95 aa)) is interaction with GORASP2. Residue Cys1399 is the site of S-palmitoyl cysteine attachment. Phosphoserine is present on residues Ser1448 and Ser1460. Positions 1456–1465 (HRNSSKHKSR) are enriched in basic residues. Positions 1456 to 1484 (HRNSSKHKSRSQIAALKEETEEEVQETRL) are disordered. Residues 1474-1484 (ETEEEVQETRL) show a composition bias toward acidic residues. Positions 1482-1484 (TRL) match the PDZ-binding motif.

It belongs to the ABC transporter superfamily. ABCC family. CFTR transporter (TC 3.A.1.202) subfamily. Monomer; does not require oligomerization for channel activity. May form oligomers in the membrane. Interacts with SLC26A3, SLC26A6 and NHERF1. Interacts with SHANK2. Interacts with MYO6. Interacts (via C-terminus) with GOPC (via PDZ domain); this promotes CFTR internalization and thereby decreases channel activity. Interacts with SLC4A7 through NHERF1. Found in a complex with MYO5B and RAB11A. Interacts with ANO1. Interacts with SLC26A8. Interacts with AHCYL1; the interaction increases CFTR activity. Interacts with CSE1L. The core-glycosylated form interacts with GORASP2 (via PDZ GRASP-type 1 domain) in respone to ER stress. Interacts with MARCHF2; the interaction leads to CFTR ubiqtuitination and degradation. Interacts with ADGRG2. Post-translationally, N-glycosylated. In terms of processing, phosphorylated; cAMP treatment promotes phosphorylation and activates the channel. Dephosphorylation decreases the ATPase activity (in vitro). Phosphorylation at PKA sites activates the channel. Phosphorylation at PKC sites enhances the response to phosphorylation by PKA. Phosphorylated by AMPK; this inhibits channel activity. Ubiquitinated, leading to its degradation in the lysosome. Deubiquitination by USP10 in early endosomes enhances its endocytic recycling to the cell membrane. Ubiquitinated by RNF185 during ER stress. Ubiquitinated by MARCHF2.

Its subcellular location is the apical cell membrane. It localises to the early endosome membrane. The protein localises to the cell membrane. The protein resides in the recycling endosome membrane. It is found in the endoplasmic reticulum membrane. Its subcellular location is the nucleus. The enzyme catalyses ATP + H2O + closed Cl(-) channel = ADP + phosphate + open Cl(-) channel.. It catalyses the reaction chloride(in) = chloride(out). It carries out the reaction hydrogencarbonate(in) = hydrogencarbonate(out). The catalysed reaction is ATP + H2O = ADP + phosphate + H(+). In terms of biological role, epithelial ion channel that plays an important role in the regulation of epithelial ion and water transport and fluid homeostasis. Mediates the transport of chloride ions across the cell membrane. Possesses an intrinsic ATPase activity and utilizes ATP to gate its channel; the passive flow of anions through the channel is gated by cycles of ATP binding and hydrolysis by the ATP-binding domains. The ion channel is also permeable to HCO(3)(-); selectivity depends on the extracellular chloride concentration. Exerts its function also by modulating the activity of other ion channels and transporters. Contributes to the regulation of the pH and the ion content of the epithelial fluid layer. Modulates the activity of the epithelial sodium channel (ENaC) complex, in part by regulating the cell surface expression of the ENaC complex. May regulate bicarbonate secretion and salvage in epithelial cells by regulating the transporter SLC4A7. Can inhibit the chloride channel activity of ANO1. Plays a role in the chloride and bicarbonate homeostasis during sperm epididymal maturation and capacitation. The sequence is that of Cystic fibrosis transmembrane conductance regulator from Mustela putorius furo (European domestic ferret).